The primary structure comprises 147 residues: Large ribosomal subunit protein uL16 (147 aa).

Belongs to the universal ribosomal protein uL16 family. As to quaternary structure, part of the 50S ribosomal subunit.

Binds 23S rRNA and is also seen to make contacts with the A and possibly P site tRNAs. This chain is Large ribosomal subunit protein uL16, found in Caldicellulosiruptor bescii (strain ATCC BAA-1888 / DSM 6725 / KCTC 15123 / Z-1320) (Anaerocellum thermophilum).